The primary structure comprises 396 residues: Elongation factor Tu (396 aa).

The 197-residue stretch at 10–206 (KPHVNIGTIG…AVDSYIPEPV (197 aa)) folds into the tr-type G domain. Positions 19–26 (GHVDHGKT) are G1. 19 to 26 (GHVDHGKT) is a binding site for GTP. Residue Thr26 participates in Mg(2+) binding. Positions 60 to 64 (GITIA) are G2. The interval 81–84 (DCPG) is G3. Residues 81–85 (DCPGH) and 136–139 (NKAD) contribute to the GTP site. The tract at residues 136–139 (NKAD) is G4. A G5 region spans residues 174 to 176 (SAL).

It belongs to the TRAFAC class translation factor GTPase superfamily. Classic translation factor GTPase family. EF-Tu/EF-1A subfamily. In terms of assembly, monomer.

It is found in the cytoplasm. It catalyses the reaction GTP + H2O = GDP + phosphate + H(+). In terms of biological role, GTP hydrolase that promotes the GTP-dependent binding of aminoacyl-tRNA to the A-site of ribosomes during protein biosynthesis. The protein is Elongation factor Tu of Geotalea uraniireducens (strain Rf4) (Geobacter uraniireducens).